We begin with the raw amino-acid sequence, 76 residues long: Small ribosomal subunit protein bS18 (76 aa).

The protein belongs to the bacterial ribosomal protein bS18 family. As to quaternary structure, part of the 30S ribosomal subunit. Forms a tight heterodimer with protein bS6.

In terms of biological role, binds as a heterodimer with protein bS6 to the central domain of the 16S rRNA, where it helps stabilize the platform of the 30S subunit. This is Small ribosomal subunit protein bS18 from Tolumonas auensis (strain DSM 9187 / NBRC 110442 / TA 4).